The following is a 243-amino-acid chain: uncharacterized protein (243 aa).

The Bipartite nuclear localization signal signature appears at 207–224; the sequence is KKTSISGYKTLDVKRKFV.

This is an uncharacterized protein from Acheta domesticus (House cricket).